Here is a 385-residue protein sequence, read N- to C-terminus: Cytochrome b (385 aa).

The Mitochondrial matrix portion of the chain corresponds to 1–27 (MRLLKSHPLLKLVNSYLIDASQPSNIS). An a ubiquinone-binding site is contributed by Tyr16. The helical transmembrane segment at 28–51 (YLWNFGSLLACCLIIQIVTGVTLA) threads the bilayer. Over 52-74 (MHYSPNVLEAFNSIEHIMRDVNN) the chain is Mitochondrial intermembrane. The chain crosses the membrane as a helical span at residues 75 to 102 (GWLVRYLHSNTASAFFFLVYLHIGRGMY). His82 and His96 together coordinate heme b. Over 103-110 (YGSYRAPR) the chain is Mitochondrial matrix. A helical membrane pass occupies residues 111 to 135 (TLVWAIGTVILILMMATAFLGYVLP). Over 136 to 172 (YGQMSLWGATVITNLISAIPWIGQDIVEFIWGGFSVN) the chain is Mitochondrial intermembrane. A helical transmembrane segment spans residues 173-205 (NATLNRFFALHFVLPFILAALVLMHLIALHDTA). Positions 183 and 197 each coordinate heme b. Position 202 (His202) interacts with a ubiquinone. Over 206 to 224 (GSSNPLGVSGNYDRITFAP) the chain is Mitochondrial matrix. Residues 225–247 (YYLFKDLITIFIFIYVLSSFVFF) traverse the membrane as a helical segment. Residues 248-288 (MPNVLGDSENYIMANPMQTPPAIVPEWYLLPFYAILRSIPN) lie on the Mitochondrial intermembrane side of the membrane. The helical transmembrane segment at 289–309 (KLLGVIAMFSAILAIMLLPIT) threads the bilayer. The Mitochondrial matrix portion of the chain corresponds to 310 to 320 (DLGRSKGLQFR). Residues 321-341 (PLSKFAFWAFVVNFLILMKLG) traverse the membrane as a helical segment. Over 342–348 (ACHVESP) the chain is Mitochondrial intermembrane. Residues 349–365 (FIELGQFSTIFYFSYFI) traverse the membrane as a helical segment. Over 366–385 (FIVPVLSLIENTLVDLNYLK) the chain is Mitochondrial matrix.

The protein belongs to the cytochrome b family. Component of the ubiquinol-cytochrome c oxidoreductase (cytochrome b-c1 complex, complex III, CIII), a multisubunit enzyme composed of 10 subunits. The complex is composed of 3 respiratory subunits cytochrome b (cob), cytochrome c1 (cyt-1) and Rieske protein (fes-1), 2 core protein subunits pep and ucr-1, and 5 low-molecular weight protein subunits qcr6, qcr7, qcr8, qcr9 and probably NCU16844/qcr10. The complex exists as an obligatory dimer and forms supercomplexes (SCs) in the inner mitochondrial membrane with NADH-ubiquinone oxidoreductase (complex I, CI) and cytochrome c oxidase (complex IV, CIV), resulting in different assemblies (supercomplexes SCI(1)III(2), SCIII(2)IV(1) and SCIII(2)IV(2) as well as higher order I(x)III(y)IV(z) megacomplexes). It depends on heme b as a cofactor.

The protein resides in the mitochondrion inner membrane. The enzyme catalyses a quinol + 2 Fe(III)-[cytochrome c](out) = a quinone + 2 Fe(II)-[cytochrome c](out) + 2 H(+)(out). In terms of biological role, component of the ubiquinol-cytochrome c oxidoreductase, a multisubunit transmembrane complex that is part of the mitochondrial electron transport chain which drives oxidative phosphorylation. The respiratory chain contains 3 multisubunit complexes succinate dehydrogenase (complex II, CII), ubiquinol-cytochrome c oxidoreductase (cytochrome b-c1 complex, complex III, CIII) and cytochrome c oxidase (complex IV, CIV), that cooperate to transfer electrons derived from NADH and succinate to molecular oxygen, creating an electrochemical gradient over the inner membrane that drives transmembrane transport and the ATP synthase. The cytochrome b-c1 complex catalyzes electron transfer from ubiquinol to cytochrome c, linking this redox reaction to translocation of protons across the mitochondrial inner membrane, with protons being carried across the membrane as hydrogens on the quinol. In the process called Q cycle, 2 protons are consumed from the matrix, 4 protons are released into the intermembrane space and 2 electrons are passed to cytochrome c. Cytochrome b is a catalytic core subunit containing 2 b-type hemes BL and BH topographically segregated in the quinone reduction (Qi) and quinol oxidation (Q0) sites on opposite sides of the membrane. The protein is Cytochrome b (cob) of Neurospora crassa (strain ATCC 24698 / 74-OR23-1A / CBS 708.71 / DSM 1257 / FGSC 987).